The primary structure comprises 245 residues: Probable phosphatase Ent638_1550 (245 aa).

Residues His7, His9, His15, His40, Glu73, His101, His131, Asp192, and His194 each contribute to the Zn(2+) site.

This sequence belongs to the PHP family. In terms of assembly, homotrimer. It depends on Zn(2+) as a cofactor.

The sequence is that of Probable phosphatase Ent638_1550 from Enterobacter sp. (strain 638).